A 500-amino-acid polypeptide reads, in one-letter code: MATARVSLILLVVVLAASACAEGLRLPRDAKFPAAQAERLIRSLNLLPKEAGPTGAGDVPSVAPGELLERRVTLPGLPQGVGDLGHHAGYYRLPNTHDARMFYFLFESRGKKEDPVVIWLTGGPGCSSELAVFYENGPFTISNNMSLAWNKFGWDTISNIIFVDQPTGTGFSYSSDDRDTRHDETGVSNDLYSFLQVFFKKHPEFAKNDFFITGESYAGHYIPAFASRVHQGNKANEGIHINLKGFAIGNGLTDPAIQYKAYTDYALDMNLIKKSDYDRINKFIPPCEFAIKLCGTNGKASCMAAYMVCNSIFSSIMKLVGTKNYYDVRKECEGKLCYDFSNLEKFFGDKAVKEAIGVGDLEFVSCSTTVYQAMLTDWMRNLEVGIPALLEDGINVLIYAGEYDLICNWLGNSRWVHSMEWSGQKDFVSSHESPFVVDGAEAGVLKSHGPLSFLKVHNAGHMVPMDQPKASLEMLRRFTQGKLKEEWLAELPEQPMYAAM.

The signal sequence occupies residues 1–21 (MATARVSLILLVVVLAASACA). Residues 22–73 (EGLRLPRDAKFPAAQAERLIRSLNLLPKEAGPTGAGDVPSVAPGELLERRVT) constitute a propeptide that is removed on maturation. 3 disulfides stabilise this stretch: Cys-126–Cys-366, Cys-294–Cys-309, and Cys-332–Cys-337. Asn-144 carries N-linked (GlcNAc...) asparagine glycosylation. Residue Ser-216 is part of the active site. Asp-404 is an active-site residue. Cys-407 is a binding site for substrate. The active site involves His-461. A propeptide spanning residues 485-500 (EEWLAELPEQPMYAAM) is cleaved from the precursor.

The protein belongs to the peptidase S10 family. In terms of assembly, monomer.

It carries out the reaction Release of a C-terminal amino acid with broad specificity.. The sequence is that of Serine carboxypeptidase 3 (CBP3) from Oryza sativa subsp. japonica (Rice).